The sequence spans 218 residues: Adenylate kinase (218 aa).

Glycine 10–threonine 15 is an ATP binding site. Residues serine 30–valine 59 are NMP. Residues threonine 31, arginine 36, glutamate 57–valine 59, and glutamine 92 each bind AMP. The LID stretch occupies residues glycine 122–aspartate 159. ATP contacts are provided by residues arginine 123 and threonine 132–tyrosine 133. The AMP site is built by arginine 156 and arginine 167. Position 202 (glutamine 202) interacts with ATP.

This sequence belongs to the adenylate kinase family. In terms of assembly, monomer.

The protein localises to the cytoplasm. The enzyme catalyses AMP + ATP = 2 ADP. The protein operates within purine metabolism; AMP biosynthesis via salvage pathway; AMP from ADP: step 1/1. Its function is as follows. Catalyzes the reversible transfer of the terminal phosphate group between ATP and AMP. Plays an important role in cellular energy homeostasis and in adenine nucleotide metabolism. This Francisella tularensis subsp. tularensis (strain FSC 198) protein is Adenylate kinase.